A 344-amino-acid chain; its full sequence is Heat-inducible transcription repressor HrcA (344 aa).

It belongs to the HrcA family.

In terms of biological role, negative regulator of class I heat shock genes (grpE-dnaK-dnaJ and groELS operons). Prevents heat-shock induction of these operons. The chain is Heat-inducible transcription repressor HrcA from Streptococcus sanguinis (strain SK36).